The sequence spans 849 residues: BRCT-containing protein 1 (849 aa).

BRCT domains are found at residues 1–75 (MLAA…FYSC), 76–167 (NPYL…PYLF), and 282–370 (PSVG…DFPV). Disordered stretches follow at residues 453–519 (QSAD…ASSD) and 606–632 (KKRRQTHRSVSSGEVSRESSESRNTNA). Positions 480–493 (ELQDEGRLEIDAKS) are enriched in basic and acidic residues. 2 consecutive BRCT domains span residues 625-715 (SESR…PYLL) and 738-843 (QGPS…RIAD).

Interacts with gammaH2A; binds phosphohistone H2A (gammaH2A) formed by Rad3/ATR checkpoint kinase at DNA lesions. Interacts with Rhp18/Rad18. Interacts with Nse5-Nse6; this allows to tether Smc5-Smc6 at replicative DNA lesions.

It is found in the nucleus. It localises to the chromosome. In terms of biological role, required for resumption of chromosome replication after DNA damage, specifically in S phase. Is recruited to chromatin in response to stalled replication forks and acts as a scaffold during DNA repair. Required for the accumulation of the Smc5-Smc6 genome stability complex in foci during replication stress and for activation of the intrinsic SUMO ligase activity of the complex by collapsed replication forks. In pericentromeric heterochromatin, enhances Clr4/Suv39-mediated H3 Lys-9 dimethylation (H3K9me2), required for stabilization of stalled replication forks and accurate chromosome segregation during mitosis. Required for mitotic fidelity, specifically in the G2 phase of the cell cycle. Plays a role in chromatin organization. This is BRCT-containing protein 1 (brc1) from Schizosaccharomyces pombe (strain 972 / ATCC 24843) (Fission yeast).